We begin with the raw amino-acid sequence, 230 residues long: 2-C-methyl-D-erythritol 4-phosphate cytidylyltransferase (230 aa).

The protein belongs to the IspD/TarI cytidylyltransferase family. IspD subfamily.

It catalyses the reaction 2-C-methyl-D-erythritol 4-phosphate + CTP + H(+) = 4-CDP-2-C-methyl-D-erythritol + diphosphate. The protein operates within isoprenoid biosynthesis; isopentenyl diphosphate biosynthesis via DXP pathway; isopentenyl diphosphate from 1-deoxy-D-xylulose 5-phosphate: step 2/6. Its function is as follows. Catalyzes the formation of 4-diphosphocytidyl-2-C-methyl-D-erythritol from CTP and 2-C-methyl-D-erythritol 4-phosphate (MEP). The sequence is that of 2-C-methyl-D-erythritol 4-phosphate cytidylyltransferase from Shewanella halifaxensis (strain HAW-EB4).